A 354-amino-acid polypeptide reads, in one-letter code: Sphingosine-1-phosphate phosphatase 2 (354 aa).

4 helical membrane-spanning segments follow: residues 43–63 (YLFR…FLPF), 76–96 (LVVI…ILKW), 115–135 (YGMP…LLIS), and 140–160 (YQYP…LVCL). The segment at 91-99 (KDILKWPRP) is phosphatase sequence motif I. The phosphatase sequence motif II stretch occupies residues 118 to 121 (PSTH). His-121 functions as the Proton donor in the catalytic mechanism. The phosphatase sequence motif III stretch occupies residues 161–172 (SRLYTGMHTVLD). The active-site Nucleophile is the His-168. 5 consecutive transmembrane segments (helical) span residues 173-193 (ILGG…AWTL), 202-222 (PLFP…YPVS), 235-255 (IVAA…FQLV), 273-293 (TDML…ILLV), and 334-354 (TSVG…LGLL).

This sequence belongs to the type 2 lipid phosphate phosphatase family. As to expression, highly expressed in pancreatic islets. Expressed in lung, small interstince, colon, kideny and brain.

It localises to the endoplasmic reticulum membrane. It carries out the reaction sphinganine 1-phosphate + H2O = sphinganine + phosphate. The catalysed reaction is sphing-4-enine 1-phosphate + H2O = sphing-4-enine + phosphate. It catalyses the reaction (4R)-hydroxysphinganine 1-phosphate + H2O = (4R)-hydroxysphinganine + phosphate. In terms of biological role, has specific phosphohydrolase activity towards sphingoid base 1-phosphates. Has high phosphohydrolase activity against dihydrosphingosine-1-phosphate and sphingosine-1-phosphate (S1P) in vitro. Sphingosine-1-phosphate phosphatase activity is needed for efficient recycling of sphingosine into the sphingolipid synthesis pathway. May play a role in attenuating intracellular sphingosine 1-phosphate (S1P) signaling. May play a role in pro-inflammatory signaling. Plays a role in the regulation of pancreatic islet beta-cell endoplasmic reticulum stress and proliferation. In Mus musculus (Mouse), this protein is Sphingosine-1-phosphate phosphatase 2.